Consider the following 175-residue polypeptide: Shikimate kinase (175 aa).

10-15 (GAGKTT) is an ATP binding site. Threonine 14 lines the Mg(2+) pocket. 3 residues coordinate substrate: aspartate 32, arginine 56, and glycine 78. Arginine 116 serves as a coordination point for ATP. Arginine 135 lines the substrate pocket.

The protein belongs to the shikimate kinase family. In terms of assembly, monomer. Mg(2+) is required as a cofactor.

It localises to the cytoplasm. The enzyme catalyses shikimate + ATP = 3-phosphoshikimate + ADP + H(+). It participates in metabolic intermediate biosynthesis; chorismate biosynthesis; chorismate from D-erythrose 4-phosphate and phosphoenolpyruvate: step 5/7. Functionally, catalyzes the specific phosphorylation of the 3-hydroxyl group of shikimic acid using ATP as a cosubstrate. In Aromatoleum aromaticum (strain DSM 19018 / LMG 30748 / EbN1) (Azoarcus sp. (strain EbN1)), this protein is Shikimate kinase.